We begin with the raw amino-acid sequence, 278 residues long: MTTRIDTRFAELRKQGRSAFVTFLMAGDPDPATSLAIIKALPRAGADIIEIGMPFTDPMADGPAVQAAGRRALDAGMTLTGTLRMIGEFRKDDDSTPVVLMGYYNPVYIYGVEKFLDDARAAGVDGLIVVDLPPEEDSELCIPAMKAGLNFIRLATPTTDDKRLPAVLANTSGFVYYVSITGITGSAAADSTAVGAAVGRIKRHTSLPVCVGFGIRTPDAARGIAERSDGAVVGSALVDALSASLDAEGKATSGTVQAVASLAAALAEGVRSARQAAE.

Residues Glu50 and Asp61 each act as proton acceptor in the active site.

Belongs to the TrpA family. As to quaternary structure, tetramer of two alpha and two beta chains.

It catalyses the reaction (1S,2R)-1-C-(indol-3-yl)glycerol 3-phosphate + L-serine = D-glyceraldehyde 3-phosphate + L-tryptophan + H2O. The protein operates within amino-acid biosynthesis; L-tryptophan biosynthesis; L-tryptophan from chorismate: step 5/5. Functionally, the alpha subunit is responsible for the aldol cleavage of indoleglycerol phosphate to indole and glyceraldehyde 3-phosphate. The protein is Tryptophan synthase alpha chain of Nitrobacter winogradskyi (strain ATCC 25391 / DSM 10237 / CIP 104748 / NCIMB 11846 / Nb-255).